Consider the following 130-residue polypeptide: Small ribosomal subunit protein uS8 (130 aa).

It belongs to the universal ribosomal protein uS8 family. In terms of assembly, part of the 30S ribosomal subunit. Contacts proteins S5 and S12.

Functionally, one of the primary rRNA binding proteins, it binds directly to 16S rRNA central domain where it helps coordinate assembly of the platform of the 30S subunit. The polypeptide is Small ribosomal subunit protein uS8 (Neisseria meningitidis serogroup C (strain 053442)).